The sequence spans 414 residues: Isocitrate dehydrogenase [NADP] cytoplasmic (414 aa).

Serine 2 carries the N-acetylserine modification. Tyrosine 42 is subject to Phosphotyrosine. Residue threonine 75 to threonine 77 participates in NADP(+) binding. Substrate is bound at residue threonine 77. Lysine 81 is modified (N6-acetyllysine). Arginine 82 is a binding site for NADP(+). Residues serine 94–arginine 100 and arginine 109 each bind substrate. Lysine 126 bears the N6-succinyllysine mark. 2 residues coordinate substrate: arginine 132 and lysine 212. Lysine 224, lysine 233, and lysine 243 each carry N6-acetyllysine. Aspartate 252 serves as a coordination point for Mn(2+). Residue lysine 260 participates in NADP(+) binding. 2 residues coordinate Mn(2+): aspartate 275 and aspartate 279. Residue glycine 310–histidine 315 coordinates NADP(+). Lysine 321 carries the N6-acetyllysine modification. Asparagine 328 contributes to the NADP(+) binding site. Serine 389 bears the Phosphoserine mark. Position 400 is an N6-succinyllysine (lysine 400).

It belongs to the isocitrate and isopropylmalate dehydrogenases family. As to quaternary structure, homodimer. Mg(2+) serves as cofactor. Mn(2+) is required as a cofactor. Post-translationally, acetylation at Lys-374 dramatically reduces catalytic activity. As to expression, highly expressed in the liver followed by kidney, lower expression in spleen, brain and lung.

It is found in the cytoplasm. The protein resides in the cytosol. The catalysed reaction is D-threo-isocitrate + NADP(+) = 2-oxoglutarate + CO2 + NADPH. Irreversibly inhibited by Cd(2+) concentrations above 50 uM. Functionally, catalyzes the NADP(+)-dependent oxidative decarboxylation of isocitrate (D-threo-isocitrate) to 2-ketoglutarate (2-oxoglutarate), which is required by other enzymes such as the phytanoyl-CoA dioxygenase. Plays a critical role in the generation of NADPH, an important cofactor in many biosynthesis pathways. May act as a corneal epithelial crystallin and may be involved in maintaining corneal epithelial transparency. The polypeptide is Isocitrate dehydrogenase [NADP] cytoplasmic (Idh1) (Mus musculus (Mouse)).